We begin with the raw amino-acid sequence, 169 residues long: Diuretic hormone 44 (169 aa).

An N-terminal signal peptide occupies residues 1–18 (MILLGILASTTIIGLTSS). A propeptide spanning residues 19–96 (APLSSYERRD…ARRKQERDQR (78 aa)) is cleaved from the precursor. Residues 83-108 (MLELARRKQERDQRQIEENRRFLENI) adopt a coiled-coil conformation. At glutamine 97 the chain carries Pyrrolidone carboxylic acid. An Isoleucine amide modification is found at isoleucine 108. Residues 109 to 169 (GKRSVPVSDA…RVQANELRLL (61 aa)) constitute a propeptide that is removed on maturation.

Residues Ile-66 to Gly-109 may constitute another form of the DH44 peptide, which has not been detected yet. As to expression, expressed in brain, ventral ganglia and the retrocerebral complex (at protein level).

It is found in the secreted. In terms of biological role, regulation of fluid secretion. This Camponotus floridanus (Florida carpenter ant) protein is Diuretic hormone 44.